The primary structure comprises 357 residues: UDP-N-acetylglucosamine--N-acetylmuramyl-(pentapeptide) pyrophosphoryl-undecaprenol N-acetylglucosamine transferase (357 aa).

UDP-N-acetyl-alpha-D-glucosamine-binding positions include 12–14, asparagine 124, arginine 163, serine 189, isoleucine 243, 262–267, and glutamine 288; these read TGG and ALTVSE.

Belongs to the glycosyltransferase 28 family. MurG subfamily.

It is found in the cell inner membrane. The enzyme catalyses di-trans,octa-cis-undecaprenyl diphospho-N-acetyl-alpha-D-muramoyl-L-alanyl-D-glutamyl-meso-2,6-diaminopimeloyl-D-alanyl-D-alanine + UDP-N-acetyl-alpha-D-glucosamine = di-trans,octa-cis-undecaprenyl diphospho-[N-acetyl-alpha-D-glucosaminyl-(1-&gt;4)]-N-acetyl-alpha-D-muramoyl-L-alanyl-D-glutamyl-meso-2,6-diaminopimeloyl-D-alanyl-D-alanine + UDP + H(+). The protein operates within cell wall biogenesis; peptidoglycan biosynthesis. In terms of biological role, cell wall formation. Catalyzes the transfer of a GlcNAc subunit on undecaprenyl-pyrophosphoryl-MurNAc-pentapeptide (lipid intermediate I) to form undecaprenyl-pyrophosphoryl-MurNAc-(pentapeptide)GlcNAc (lipid intermediate II). This chain is UDP-N-acetylglucosamine--N-acetylmuramyl-(pentapeptide) pyrophosphoryl-undecaprenol N-acetylglucosamine transferase, found in Pseudomonas aeruginosa (strain LESB58).